The sequence spans 817 residues: MVAIENKEVLFGGSLKSTEEYDQFFCPSIDIPKFLFKYWDSKPLGKNVSSDQFAETAIQMLEYFIQNNYTGPYLPIKPEIWLPQRLRDEATLKDAIIKSLTVEGERPYRLAPKLLFLLLSQTLFNYANSKDPLHIWYKARLDFLHQQMLKEHVSELFNQIMEGMHIVSSHVSSLDRDLQGRFTMEMGLIQSYYGRDTLALQLMKESAKVMDFHFELTGALGRRTKFQTFDTSQLVVLAKSRDRCKDTEQNKSTSTQPITFELNDDTLLEKISFKEDQKSLAPSEELDPILSSEDPNHPSKLDPLDASLLLAFCHIIKNNNPDDGLTREEMAPYAERVLVYPVNWSVYTMALLVRARLEGFKSRTVERSVLQMQALLDQLNDQLSFGKSPEGVDKPENDEGLGSFLPKPQDGENSASLKERLNYFYNLLMPSRWQLEAELAERFISVGATKSALEIFERLQMWDCVVMCHCSLNRQDLAVQVIKRELENDPYDFLLRTLLGDIENNPKHYVEAWELSCKRFAPAQRSLGKYYYKKGDLLQAMNCFNESLKINPLSYPTWFTYGCAALELQKYDAAMEAFSRCLSINPEDGESWNNLASAMLKAKDHTKEQAWHAMQQGIKYMYDNWRIWENYMLISVDVNKWSEVIRALRRIIEIKGKDEGERAVDVQCLDLVVNYVMQSCDNDASGLARMLNELLKMVVPLITNDVRLWRIVARYYLWRRHFAESLNATLKAYRILISSPNVTSDEATWNKTVEGALELVEAYANLGEMPGRMGGVVAKDWKFKSRSVLRSLIGKGKNIWENTESYQKLESELENLK.

2 disordered regions span residues 276 to 298 and 386 to 413; these read DQKSLAPSEELDPILSSEDPNHP and GKSPEGVDKPENDEGLGSFLPKPQDGEN. TPR repeat units follow at residues 459–492, 521–554, 555–588, and 625–658; these read LQMWDCVVMCHCSLNRQDLAVQVIKRELENDPYD, APAQRSLGKYYYKKGDLLQAMNCFNESLKINPLS, YPTWFTYGCAALELQKYDAAMEAFSRCLSINPED, and WRIWENYMLISVDVNKWSEVIRALRRIIEIKGKD.

This Schizosaccharomyces pombe (strain 972 / ATCC 24843) (Fission yeast) protein is TPR repeat-containing protein C19B12.01.